The primary structure comprises 47 residues: Protein PsbN (47 aa).

A helical membrane pass occupies residues 7–29; the sequence is VAISISCLLISFTGYALYTAFGN.

This sequence belongs to the PsbN family.

It is found in the plastid membrane. May play a role in photosystem I and II biogenesis. The sequence is that of Protein PsbN from Aneura mirabilis (Parasitic liverwort).